A 54-amino-acid polypeptide reads, in one-letter code: Soricidin (54 aa).

Disulfide bonds link Cys-2-Cys-23, Cys-6-Cys-27, and Cys-9-Cys-41.

The protein belongs to the opioid neuropeptide precursor family. In terms of assembly, member of a multiprotein complex. Salivary gland.

Its subcellular location is the secreted. In terms of biological role, paralytic toxin that immobilizes a mealworm for 7 days. Inhibits the transient receptor potential cation channel subfamily V member 6 (TRPV6). The polypeptide is Soricidin (Blarina brevicauda (Northern short-tailed shrew)).